The chain runs to 87 residues: MKHIDKGTVVRTVLLFIALVNQTLIMFGKPVLPVAEDQIHTLADALYSAGSAAFTIAASLVAWYKNNYVTSKGKMQKEVLQKKGLTK.

Residues 42–62 (LADALYSAGSAAFTIAASLVA) form a helical membrane-spanning segment.

Belongs to the SPP1 holin family.

The protein localises to the membrane. This is an uncharacterized protein from Bacillus licheniformis.